We begin with the raw amino-acid sequence, 329 residues long: D-alanine--D-alanine ligase (329 aa).

An ATP-grasp domain is found at Lys121–Thr327. Ala151–Glu206 serves as a coordination point for ATP. Positions 281, 294, and 296 each coordinate Mg(2+).

The protein belongs to the D-alanine--D-alanine ligase family. The cofactor is Mg(2+). Mn(2+) serves as cofactor.

Its subcellular location is the cytoplasm. It carries out the reaction 2 D-alanine + ATP = D-alanyl-D-alanine + ADP + phosphate + H(+). It participates in cell wall biogenesis; peptidoglycan biosynthesis. In terms of biological role, cell wall formation. This chain is D-alanine--D-alanine ligase, found in Vibrio cholerae serotype O1 (strain ATCC 39541 / Classical Ogawa 395 / O395).